The following is a 187-amino-acid chain: Large ribosomal subunit protein uL22 (187 aa).

Positions 155–187 (DAVSRAAPTDDAPAKKKLSKKKLARQKEKMMRE) are disordered. Basic residues predominate over residues 169–178 (KKKLSKKKLA).

Belongs to the universal ribosomal protein uL22 family.

This is Large ribosomal subunit protein uL22 (RpL17) from Lonomia obliqua (Moth).